We begin with the raw amino-acid sequence, 432 residues long: Major royal jelly protein 1 (432 aa).

An N-terminal signal peptide occupies residues 1-19 (MTRLFMLVCLGIVCQGTTG). Residues Asn28, Asn144, and Asn177 are each glycosylated (N-linked (GlcNAc...) asparagine). 3 cysteine pairs are disulfide-bonded: Cys118/Cys150, Cys132/Cys195, and Cys329/Cys416. Position 364 (Pro364) interacts with 24-methylenecholesterol. His431 bears the Histidine amide; atypical mark. Leu432 carries the post-translational modification Leucine amide; atypical.

This sequence belongs to the major royal jelly protein family. As to quaternary structure, is present in royal jelly in different forms: monomer (55 kDa), oligomeric subunit (ca. 287-420 kDa), and water-insoluble aggregates in sediment after interaction with fatty acids. Component of the apisin heterooligomer complex consisting of 4 copies of MRJP1 and 4 copies of apisimin, associated with 8 molecules of 24-methylenecholesterol; apisimin forms a bridge connecting two MRJP1 dimers. At low pH multiple apisin octamers stack to form filaments that increase the viscosity of royal jelly; these filaments may be stabilized by bound fatty acid chains. The mandibular gland, where royal jelly is produced, has low pH conditions favouring filament formation, while the higher pH of the insect midgut favors filament disassembly. N-glycosylated on Asn-28, Asn-144 and Asn-177. Glycosylation is required to prevent apisin multimers from aggregating. Post-translationally, jellein-2 is probably processed to yield jellein-1 and jellein-4. Found in and secreted from the hypopharyngeal glands of the worker honey bee (at protein level); expression peaks at 12 days post eclosion. Expressed in the brains of worker bees (at protein level); found in antennal lobe, optical lobe and a subpopulation of Kenyon cells in the mushroom body. Found in the ommatidia of worker bees (at protein level). Expressed in the spermatheca of adult queen bees (at protein level); expression levels are higher in mated queens than in virgin queens. Expressed in queen bee ovaries and male drone testes.

Its subcellular location is the secreted. It is found in the cytoplasm. It localises to the cell projection. The protein resides in the rhabdomere. The protein localises to the cytoskeleton. Most abundant protein component of royal jelly, a substance produced in the hypopharyngeal gland containing proteins, free amino acids, fatty acids, sugars and other nutrients, which is fed to developing larvae by worker nurse bees. Major royal jelly proteins (Mrjps) are high in essential amino acids and probably have a nutritional function in larval food. All larvae are fed some royal jelly (also known as worker jelly) early in their development but it forms the principal source of nutrition for larvae destined to become queen bees. Induces the differentiation of honey bee larvae into queens through an Egfr-mediated signaling pathway. Promotes body size increase by activating p70 S6 kinase, stimulates ovary development by augmenting the titer of vitellogenin (Vg) and juvenile hormone, and reduces developmental time by increasing the activity of mitogen-activated protein kinase and inducing 20-hydroxyecdysone (ecdysterone, 20E) production. Together with apisimin forms the apisin complex that polymerizes at low pH, forming a fiber network and increasing the viscosity of royal jelly. The viscous royal Jelly placed in honeycomb cells containing larvae destined to become queens acts as both a food supply and an adhesive preventing larvae from falling out; queens are reared in special large cells oriented vertically. Produced in the spermatheca of adult queen bees, along with other major royal jelly proteins, where it may act as a nutrient supply for sperm stored by mated queens, or be involved in energy metabolism. In terms of biological role, has antibacterial activity against the Gram-positive bacteria S.aureus ATCC 6535, S.saprophyticus and B.subtilis CCT2471, and the Gram-negative bacteria E.coli CCT1371, E.cloacae ATCC 23355, K.pneumoniae ATCC 13883 and P.aeruginosa ATCC 27853, and antifungal activity against C.albicans. Lack cytolytic activity and does not induce rat peritoneal mast cell degranulation. Its function is as follows. Lacks antibacterial and antifungal activity. Lacks cytolytic activity and does not induce rat peritoneal mast cell degranulation. This is Major royal jelly protein 1 from Apis mellifera (Honeybee).